The primary structure comprises 255 residues: Thiazole synthase (255 aa).

Lysine 97 (schiff-base intermediate with DXP) is an active-site residue. 1-deoxy-D-xylulose 5-phosphate-binding positions include glycine 158, alanine 184–glycine 185, and asparagine 206–threonine 207.

This sequence belongs to the ThiG family. In terms of assembly, homotetramer. Forms heterodimers with either ThiH or ThiS.

The protein localises to the cytoplasm. It catalyses the reaction [ThiS sulfur-carrier protein]-C-terminal-Gly-aminoethanethioate + 2-iminoacetate + 1-deoxy-D-xylulose 5-phosphate = [ThiS sulfur-carrier protein]-C-terminal Gly-Gly + 2-[(2R,5Z)-2-carboxy-4-methylthiazol-5(2H)-ylidene]ethyl phosphate + 2 H2O + H(+). Its pathway is cofactor biosynthesis; thiamine diphosphate biosynthesis. In terms of biological role, catalyzes the rearrangement of 1-deoxy-D-xylulose 5-phosphate (DXP) to produce the thiazole phosphate moiety of thiamine. Sulfur is provided by the thiocarboxylate moiety of the carrier protein ThiS. In vitro, sulfur can be provided by H(2)S. The protein is Thiazole synthase of Acetivibrio thermocellus (strain ATCC 27405 / DSM 1237 / JCM 9322 / NBRC 103400 / NCIMB 10682 / NRRL B-4536 / VPI 7372) (Clostridium thermocellum).